The chain runs to 292 residues: 2-(5''-triphosphoribosyl)-3'-dephosphocoenzyme-A synthase (292 aa).

Belongs to the CitG/MdcB family.

It catalyses the reaction 3'-dephospho-CoA + ATP = 2'-(5''-triphospho-alpha-D-ribosyl)-3'-dephospho-CoA + adenine. In terms of biological role, catalyzes the formation of 2-(5''-triphosphoribosyl)-3'-dephosphocoenzyme-A, the precursor of the prosthetic group of the holo-acyl carrier protein (gamma chain) of citrate lyase, from ATP and dephospho-CoA. This Escherichia coli O139:H28 (strain E24377A / ETEC) protein is 2-(5''-triphosphoribosyl)-3'-dephosphocoenzyme-A synthase.